The sequence spans 278 residues: Large ribosomal subunit protein uL2 (278 aa).

Residues 223–278 form a disordered region; that stretch reads GVAMNPIDHPHGGGEGRTSGGRHPVTPWGFPTKGKKTRSNKRTDTFIVSSRHNRKK.

Belongs to the universal ribosomal protein uL2 family. Part of the 50S ribosomal subunit. Forms a bridge to the 30S subunit in the 70S ribosome.

One of the primary rRNA binding proteins. Required for association of the 30S and 50S subunits to form the 70S ribosome, for tRNA binding and peptide bond formation. It has been suggested to have peptidyltransferase activity; this is somewhat controversial. Makes several contacts with the 16S rRNA in the 70S ribosome. The chain is Large ribosomal subunit protein uL2 from Methylobacterium nodulans (strain LMG 21967 / CNCM I-2342 / ORS 2060).